A 479-amino-acid polypeptide reads, in one-letter code: Adenosylhomocysteinase (479 aa).

The substrate site is built by Thr56, Asp133, and Glu199. 200–202 (TTT) serves as a coordination point for NAD(+). Substrate contacts are provided by Lys229 and Asp233. NAD(+) contacts are provided by residues Asn234, 263 to 268 (GYGDVG), Glu286, Asn321, 342 to 344 (IGH), and Asn390.

This sequence belongs to the adenosylhomocysteinase family. In terms of assembly, homotetramer. NAD(+) serves as cofactor.

The catalysed reaction is S-adenosyl-L-homocysteine + H2O = L-homocysteine + adenosine. It functions in the pathway amino-acid biosynthesis; L-homocysteine biosynthesis; L-homocysteine from S-adenosyl-L-homocysteine: step 1/1. Functionally, adenosylhomocysteine is a competitive inhibitor of S-adenosyl-L-methionine-dependent methyl transferase reactions; therefore adenosylhomocysteinase may play a key role in the control of methylations via regulation of the intracellular concentration of adenosylhomocysteine. This Plasmodium yoelii yoelii protein is Adenosylhomocysteinase.